The sequence spans 180 residues: UPF0227 protein YcfP (180 aa).

It belongs to the UPF0227 family.

The polypeptide is UPF0227 protein YcfP (Salmonella gallinarum (strain 287/91 / NCTC 13346)).